The chain runs to 340 residues: Cobalt-precorrin-5B C(1)-methyltransferase (340 aa).

It belongs to the CbiD family.

The enzyme catalyses Co-precorrin-5B + S-adenosyl-L-methionine = Co-precorrin-6A + S-adenosyl-L-homocysteine. The protein operates within cofactor biosynthesis; adenosylcobalamin biosynthesis; cob(II)yrinate a,c-diamide from sirohydrochlorin (anaerobic route): step 6/10. Functionally, catalyzes the methylation of C-1 in cobalt-precorrin-5B to form cobalt-precorrin-6A. This Methanococcoides burtonii (strain DSM 6242 / NBRC 107633 / OCM 468 / ACE-M) protein is Cobalt-precorrin-5B C(1)-methyltransferase.